Reading from the N-terminus, the 429-residue chain is Glutamate-1-semialdehyde 2,1-aminomutase (429 aa).

At Lys265 the chain carries N6-(pyridoxal phosphate)lysine.

This sequence belongs to the class-III pyridoxal-phosphate-dependent aminotransferase family. HemL subfamily. Homodimer. Pyridoxal 5'-phosphate is required as a cofactor.

Its subcellular location is the cytoplasm. The catalysed reaction is (S)-4-amino-5-oxopentanoate = 5-aminolevulinate. The protein operates within porphyrin-containing compound metabolism; protoporphyrin-IX biosynthesis; 5-aminolevulinate from L-glutamyl-tRNA(Glu): step 2/2. In Legionella pneumophila subsp. pneumophila (strain Philadelphia 1 / ATCC 33152 / DSM 7513), this protein is Glutamate-1-semialdehyde 2,1-aminomutase.